Reading from the N-terminus, the 347-residue chain is NADH-quinone oxidoreductase subunit H (347 aa).

A run of 8 helical transmembrane segments spans residues 25–45, 95–115, 128–148, 168–188, 200–220, 251–271, 284–304, and 324–344; these read ILFM…VAAM, FMFT…FAII, IGIL…LFGG, ISYE…TGSF, GWYI…GVAV, FFIG…CLFF, FIPP…MFVL, and VCLP…LIFS.

It belongs to the complex I subunit 1 family. NDH-1 is composed of 14 different subunits. Subunits NuoA, H, J, K, L, M, N constitute the membrane sector of the complex.

It is found in the cell inner membrane. The catalysed reaction is a quinone + NADH + 5 H(+)(in) = a quinol + NAD(+) + 4 H(+)(out). NDH-1 shuttles electrons from NADH, via FMN and iron-sulfur (Fe-S) centers, to quinones in the respiratory chain. The immediate electron acceptor for the enzyme in this species is believed to be ubiquinone. Couples the redox reaction to proton translocation (for every two electrons transferred, four hydrogen ions are translocated across the cytoplasmic membrane), and thus conserves the redox energy in a proton gradient. This subunit may bind ubiquinone. This chain is NADH-quinone oxidoreductase subunit H, found in Psychrobacter cryohalolentis (strain ATCC BAA-1226 / DSM 17306 / VKM B-2378 / K5).